We begin with the raw amino-acid sequence, 222 residues long: Putative N-acetylmannosamine-6-phosphate 2-epimerase (222 aa).

It belongs to the NanE family.

The enzyme catalyses an N-acyl-D-glucosamine 6-phosphate = an N-acyl-D-mannosamine 6-phosphate. It participates in amino-sugar metabolism; N-acetylneuraminate degradation; D-fructose 6-phosphate from N-acetylneuraminate: step 3/5. Its function is as follows. Converts N-acetylmannosamine-6-phosphate (ManNAc-6-P) to N-acetylglucosamine-6-phosphate (GlcNAc-6-P). The sequence is that of Putative N-acetylmannosamine-6-phosphate 2-epimerase from Staphylococcus aureus (strain MSSA476).